Consider the following 301-residue polypeptide: Nucleotide-binding protein MAB_2783c (301 aa).

An ATP-binding site is contributed by 24 to 31 (GLSGAGRG). 75 to 78 (DVRS) is a binding site for GTP.

Belongs to the RapZ-like family.

Its function is as follows. Displays ATPase and GTPase activities. This is Nucleotide-binding protein MAB_2783c from Mycobacteroides abscessus (strain ATCC 19977 / DSM 44196 / CCUG 20993 / CIP 104536 / JCM 13569 / NCTC 13031 / TMC 1543 / L948) (Mycobacterium abscessus).